The following is a 366-amino-acid chain: tRNA/tmRNA (uracil-C(5))-methyltransferase (366 aa).

Residues Q189, Y217, N222, E238, and D298 each coordinate S-adenosyl-L-methionine. The active-site Nucleophile is C323. The Proton acceptor role is filled by E357.

Belongs to the class I-like SAM-binding methyltransferase superfamily. RNA M5U methyltransferase family. TrmA subfamily.

The catalysed reaction is uridine(54) in tRNA + S-adenosyl-L-methionine = 5-methyluridine(54) in tRNA + S-adenosyl-L-homocysteine + H(+). The enzyme catalyses uridine(341) in tmRNA + S-adenosyl-L-methionine = 5-methyluridine(341) in tmRNA + S-adenosyl-L-homocysteine + H(+). Functionally, dual-specificity methyltransferase that catalyzes the formation of 5-methyluridine at position 54 (m5U54) in all tRNAs, and that of position 341 (m5U341) in tmRNA (transfer-mRNA). The protein is tRNA/tmRNA (uracil-C(5))-methyltransferase of Shewanella putrefaciens (strain CN-32 / ATCC BAA-453).